A 347-amino-acid chain; its full sequence is DNA damage tolerance protein RHC31 (347 aa).

Position 9 is a phosphoserine (S9). Residue K35 forms a Glycyl lysine isopeptide (Lys-Gly) (interchain with G-Cter in SUMO) linkage.

Its function is as follows. Could be involved in a ubiquitin-related process important for DNA damage tolerance. This is DNA damage tolerance protein RHC31 (AOS1) from Saccharomyces cerevisiae (strain ATCC 204508 / S288c) (Baker's yeast).